The chain runs to 593 residues: Glutamyl-tRNA(Gln) amidotransferase subunit B, mitochondrial (593 aa).

A mitochondrion-targeting transit peptide spans 1-49; that stretch reads MLRPWLRQSTRAARSLPCCQCPRPYSSRLPTLTSPSSSVRRLQTSASES. Over residues 27-42 the composition is skewed to low complexity; sequence SRLPTLTSPSSSVRRL. Residues 27–80 form a disordered region; sequence SRLPTLTSPSSSVRRLQTSASESQDRVPLRKQLKQNAKALKAEKRQRRESEEAS. Residues 66 to 80 show a composition bias toward basic and acidic residues; the sequence is LKAEKRQRRESEEAS.

Belongs to the GatB/GatE family. GatB subfamily. In terms of assembly, subunit of the heterotrimeric GatCAB amidotransferase (AdT) complex, composed of A, B and C subunits.

It localises to the mitochondrion. It carries out the reaction L-glutamyl-tRNA(Gln) + L-glutamine + ATP + H2O = L-glutaminyl-tRNA(Gln) + L-glutamate + ADP + phosphate + H(+). In terms of biological role, allows the formation of correctly charged Gln-tRNA(Gln) through the transamidation of misacylated Glu-tRNA(Gln) in the mitochondria. The reaction takes place in the presence of glutamine and ATP through an activated gamma-phospho-Glu-tRNA(Gln). The chain is Glutamyl-tRNA(Gln) amidotransferase subunit B, mitochondrial from Aspergillus oryzae (strain ATCC 42149 / RIB 40) (Yellow koji mold).